We begin with the raw amino-acid sequence, 98 residues long: uncharacterized protein (98 aa).

This is an uncharacterized protein from Acidianus two-tailed virus (ATV).